The chain runs to 750 residues: Cation-transporting P-type ATPase B (750 aa).

The HMA domain maps to 17–80; that stretch reads RRIQLDVAGM…VIEQAGYRAT (64 aa). A metal cation-binding residues include Cys28 and Cys31. The next 6 membrane-spanning stretches (helical) occupy residues 104 to 124, 129 to 149, 167 to 187, 200 to 220, 360 to 380, and 389 to 409; these read LIVAALLFVPLADLSTMFAIV, FPGWGYLLTALAAPIVTWAAW, ETLISAGILAATGWSLSTIFV, AILHSDSIYFEVAAGVTVFVL, IAAVFVPMVFVIAGLAGASWL, and AFSVVLGVLVIACPCTLGLAT. Asp445 (4-aspartylphosphate intermediate) is an active-site residue. 6 helical membrane passes run 471-491, 500-520, 547-567, 663-683, 693-713, and 715-735; these read VLALASAVEAASEHSVATAIV, VADFVAFAGCGVSGVVAEHHV, SRGETVVFVSVDGVACGAVAI, VAIGAADLILVRDSLGVVPVA, TIRINMIWAFGYNVAAIPIAS, and GLLNPLIAGAAMAFSSFFVVS.

It belongs to the cation transport ATPase (P-type) (TC 3.A.3) family. Type IB subfamily.

Its subcellular location is the cell membrane. It carries out the reaction ATP + H2O = ADP + phosphate + H(+). The protein is Cation-transporting P-type ATPase B (ctpB) of Mycobacterium leprae (strain TN).